A 128-amino-acid chain; its full sequence is MEQYYGTGRRKEAVARVFLRPGNGKVTVNGQDFNEYFQGLVRAVAALEPLRAVDALGHFDAYITVRGGGKSGQIDAIKLGIARALVQYNPDYRAKLKPLGFLTRDARVVERKKYGKHKARRAPQYSKR.

As to quaternary structure, part of the 30S ribosomal subunit. Contacts proteins S7 and S10.

Its function is as follows. Part of the top of the head of the 30S subunit. The C-terminal region penetrates the head emerging in the P-site where it contacts tRNA. This Thermus thermophilus (strain ATCC 27634 / DSM 579 / HB8) protein is Small ribosomal subunit protein uS9 (rpsI).